Consider the following 81-residue polypeptide: Mipartoxin-1 (81 aa).

The N-terminal stretch at Met1 to Ser21 is a signal peptide. Intrachain disulfides connect Cys24–Cys42, Cys35–Cys61, Cys65–Cys73, and Cys74–Cys79.

Belongs to the three-finger toxin family. Short-chain subfamily. Post-translationally, contains 4 disulfide bonds. As to expression, expressed by the venom gland.

The protein localises to the secreted. Its function is as follows. Snake venom neurotoxin that blocks neuromuscular transmission on both avian and mouse nerve-muscle preparations, presenting a postsynaptic action through the nicotinic acetylcholine receptor (nAChR). Reversibly inhibits twitches in mouse phrenic nerve diaphragm and irreversibly in chick biventer cervicis muscle. Has no cytotoxic activity towards C2C12 cells up to 180 ug/ml. This Micrurus mipartitus (Red-tailed coral snake) protein is Mipartoxin-1.